The primary structure comprises 224 residues: 2-phospho-L-lactate guanylyltransferase (224 aa).

Belongs to the CofC family. In terms of assembly, homodimer.

The catalysed reaction is (2S)-2-phospholactate + GTP + H(+) = (2S)-lactyl-2-diphospho-5'-guanosine + diphosphate. It participates in cofactor biosynthesis; coenzyme F420 biosynthesis. Guanylyltransferase that catalyzes the activation of (2S)-2-phospholactate (2-PL) as (2S)-lactyl-2-diphospho-5'-guanosine, via the condensation of 2-PL with GTP. It is involved in the biosynthesis of coenzyme F420, a hydride carrier cofactor. The polypeptide is 2-phospho-L-lactate guanylyltransferase (Methanobrevibacter smithii (strain ATCC 35061 / DSM 861 / OCM 144 / PS)).